A 132-amino-acid polypeptide reads, in one-letter code: Small ribosomal subunit protein uS8 (132 aa).

It belongs to the universal ribosomal protein uS8 family. As to quaternary structure, part of the 30S ribosomal subunit. Contacts proteins S5 and S12.

Functionally, one of the primary rRNA binding proteins, it binds directly to 16S rRNA central domain where it helps coordinate assembly of the platform of the 30S subunit. The chain is Small ribosomal subunit protein uS8 from Streptococcus pyogenes serotype M1.